A 143-amino-acid chain; its full sequence is Endoribonuclease YbeY (143 aa).

Residues His-111, His-115, and Asp-121 each contribute to the Zn(2+) site.

It belongs to the endoribonuclease YbeY family. It depends on Zn(2+) as a cofactor.

Its subcellular location is the cytoplasm. In terms of biological role, single strand-specific metallo-endoribonuclease involved in late-stage 70S ribosome quality control and in maturation of the 3' terminus of the 16S rRNA. The sequence is that of Endoribonuclease YbeY from Cytophaga hutchinsonii (strain ATCC 33406 / DSM 1761 / CIP 103989 / NBRC 15051 / NCIMB 9469 / D465).